The sequence spans 207 residues: FMN-dependent NADH:quinone oxidoreductase (207 aa).

FMN is bound by residues Ser10, 16-18 (SIS), 96-99 (MYNL), and 141-144 (SRGG).

It belongs to the azoreductase type 1 family. In terms of assembly, homodimer. It depends on FMN as a cofactor.

It catalyses the reaction 2 a quinone + NADH + H(+) = 2 a 1,4-benzosemiquinone + NAD(+). The catalysed reaction is N,N-dimethyl-1,4-phenylenediamine + anthranilate + 2 NAD(+) = 2-(4-dimethylaminophenyl)diazenylbenzoate + 2 NADH + 2 H(+). Its function is as follows. Quinone reductase that provides resistance to thiol-specific stress caused by electrophilic quinones. Also exhibits azoreductase activity. Catalyzes the reductive cleavage of the azo bond in aromatic azo compounds to the corresponding amines. This is FMN-dependent NADH:quinone oxidoreductase from Nostoc sp. (strain PCC 7120 / SAG 25.82 / UTEX 2576).